A 132-amino-acid chain; its full sequence is Galectin-2 (132 aa).

A Galectin domain is found at 4–131 (ELEVKNMDMK…GFNMSSFKLK (128 aa)). 65-71 (WGQEQRE) contributes to the a beta-D-galactoside binding site.

Homodimer.

This protein binds beta-galactoside. Its physiological function is not yet known. This is Galectin-2 (LGALS2) from Homo sapiens (Human).